Consider the following 145-residue polypeptide: Superoxide dismutase [Mn/Fe] (145 aa).

Residues histidine 10 and histidine 64 each coordinate Fe(3+). Mn(2+) is bound by residues histidine 10 and histidine 64.

This sequence belongs to the iron/manganese superoxide dismutase family. Requires Mn(2+) as cofactor. The cofactor is Fe(3+).

The enzyme catalyses 2 superoxide + 2 H(+) = H2O2 + O2. In terms of biological role, destroys superoxide anion radicals which are normally produced within the cells and which are toxic to biological systems. Catalyzes the dismutation of superoxide anion radicals into O2 and H2O2 by successive reduction and oxidation of the transition metal ion at the active site. The polypeptide is Superoxide dismutase [Mn/Fe] (sodA) (Streptococcus acidominimus).